The primary structure comprises 507 residues: ATP synthase subunit alpha, plastid (507 aa).

Residue 170 to 177 (GDRQTGKT) coordinates ATP.

The protein belongs to the ATPase alpha/beta chains family. F-type ATPases have 2 components, CF(1) - the catalytic core - and CF(0) - the membrane proton channel. CF(1) has five subunits: alpha(3), beta(3), gamma(1), delta(1), epsilon(1). CF(0) has four main subunits: a, b, b' and c.

Its subcellular location is the plastid membrane. It catalyses the reaction ATP + H2O + 4 H(+)(in) = ADP + phosphate + 5 H(+)(out). In terms of biological role, produces ATP from ADP in the presence of a proton gradient across the membrane. The alpha chain is a regulatory subunit. In Cuscuta gronovii (Common dodder), this protein is ATP synthase subunit alpha, plastid.